A 366-amino-acid chain; its full sequence is NAD(P)H-quinone oxidoreductase subunit 1, chloroplastic (366 aa).

Helical transmembrane passes span 29–49, 97–117, 130–150, 166–186, 202–222, 254–274, 307–327, and 340–360; these read WITA…LVIV, LLFS…YLVI, IGVF…FMAG, VAQA…ISLL, FGFW…FLIA, FGLF…FVTV, VIIG…ISIV, and LLNL…LLTA.

It belongs to the complex I subunit 1 family. As to quaternary structure, NDH is composed of at least 16 different subunits, 5 of which are encoded in the nucleus.

The protein localises to the plastid. It is found in the chloroplast thylakoid membrane. The catalysed reaction is a plastoquinone + NADH + (n+1) H(+)(in) = a plastoquinol + NAD(+) + n H(+)(out). The enzyme catalyses a plastoquinone + NADPH + (n+1) H(+)(in) = a plastoquinol + NADP(+) + n H(+)(out). Its function is as follows. NDH shuttles electrons from NAD(P)H:plastoquinone, via FMN and iron-sulfur (Fe-S) centers, to quinones in the photosynthetic chain and possibly in a chloroplast respiratory chain. The immediate electron acceptor for the enzyme in this species is believed to be plastoquinone. Couples the redox reaction to proton translocation, and thus conserves the redox energy in a proton gradient. The protein is NAD(P)H-quinone oxidoreductase subunit 1, chloroplastic of Anthoceros angustus (Hornwort).